The following is an 85-amino-acid chain: Large ribosomal subunit protein bL27 (85 aa).

Positions 1–22 (MAHKKGVGSTRNGRDSESKRLG) are disordered.

Belongs to the bacterial ribosomal protein bL27 family.

This chain is Large ribosomal subunit protein bL27, found in Geobacter metallireducens (strain ATCC 53774 / DSM 7210 / GS-15).